We begin with the raw amino-acid sequence, 295 residues long: uncharacterized protein (295 aa).

Residues 1-19 (MFKKYIFILILFIASIARA) form the signal peptide. A disordered region spans residues 275–295 (RNNPPLKNNNAKGKNPYDTNK). Low complexity predominate over residues 276 to 295 (NNPPLKNNNAKGKNPYDTNK).

This is an uncharacterized protein from Rickettsia conorii (strain ATCC VR-613 / Malish 7).